The primary structure comprises 228 residues: Chaperone protein FanE (228 aa).

The signal sequence occupies residues 1 to 19 (MNKFISIIALCVFSSYANA). A disulfide bond links Cys-157 and Cys-198.

It belongs to the periplasmic pilus chaperone family.

The protein localises to the periplasm. Mediates assembly of pili by forming soluble multimeric complexes with pili subunits as an intermediate step in the assembly process. This protein is involved in K99 pili assembly. The polypeptide is Chaperone protein FanE (fanE) (Escherichia coli).